The chain runs to 279 residues: Undecaprenyl-diphosphatase (279 aa).

8 helical membrane-spanning segments follow: residues 2–22, 44–64, 85–105, 113–133, 163–183, 188–208, 225–245, and 255–275; these read LFIELLKAIFFGVIEGVTEWL, AFMEMFNIVIQLGAIIAVIVI, WQLWLKVAIACIPSIIIAVPL, FNHMLPIAIALIVYGVAFLWI, VLSIIPGTSRSGATILGAIIL, TVAADFTFFLAIPTMFGYSGL, LLVLLVASLTAFAVSLYVIKL, and FTVFGRYRIVLGSLLIVYSVF.

The protein belongs to the UppP family.

It localises to the cell membrane. The catalysed reaction is di-trans,octa-cis-undecaprenyl diphosphate + H2O = di-trans,octa-cis-undecaprenyl phosphate + phosphate + H(+). Catalyzes the dephosphorylation of undecaprenyl diphosphate (UPP). Confers resistance to bacitracin. In Streptococcus equi subsp. zooepidemicus (strain H70), this protein is Undecaprenyl-diphosphatase.